Consider the following 294-residue polypeptide: Cyclin-dependent kinase A-1 (294 aa).

Residues 4-287 (YEKVEKIGEG…ARAALEHEYF (284 aa)) enclose the Protein kinase domain. ATP is bound by residues 10-18 (IGEGTYGVV) and K33. Position 15 is a phosphotyrosine (Y15). The active-site Proton acceptor is D127. Phosphothreonine is present on T161.

It belongs to the protein kinase superfamily. CMGC Ser/Thr protein kinase family. CDC2/CDKX subfamily. In terms of assembly, interacts with CDT1A, CYCA2-3, CYCD2-1, CYCD3-1, CYCD4-1, CYCD4-2, CYCH1-1, CYCU1-1, CYCU2-1, CYCU2-2, CYCU3-1, CYCU4-1, CYCU4-2, CYCU4-3, CKS1, KRP2/ICK2, KRP3/ICK6, KRP4/ICK7, KRP6/ICK4, KRP7/ICK5, and C-terminal domain of KRP1/ICK1. Interacts with WEE1 and TIF4A-1/EIF4A-1. Interacts with PAS2; when phosphorylated at Tyr-15. Interacts with SMR3, SMR4, SMR5, SMR6, SMR8 and At4g14310. Binds to CYCD3-2. Component of a DREAM-like complex which modulates a variety of developmentally regulated genes and of the mitotic genes in proliferating and differentiated cells. Interacts with MYB3R3 at later and with MYB3R4 at earlier stages of leaf development. May interact with SPCH. In terms of processing, phosphorylated at Tyr-15 by WEE1. Phosphorylation at Thr-161 is important for the kinase activity and substrate binding. Binding to the anti-phosphatase PAS2 prevents dephosphorylation. In terms of tissue distribution, expressed in roots, stems, flowers and siliques.

The protein localises to the cytoplasm. The protein resides in the nucleus. The catalysed reaction is L-seryl-[protein] + ATP = O-phospho-L-seryl-[protein] + ADP + H(+). The enzyme catalyses L-threonyl-[protein] + ATP = O-phospho-L-threonyl-[protein] + ADP + H(+). It carries out the reaction [DNA-directed RNA polymerase] + ATP = phospho-[DNA-directed RNA polymerase] + ADP + H(+). CDK kinase activated by CDKF-1. CDK kinase activity inhibited by KRP1/ICK1, KRP2/ICK2, KRP3/ICK6, KRP4/ICK7, KRP5/ICK3, KRP6/ICK4 and KRP7/ICK5. Down-regulated by phosphorylation by WEE1. In terms of biological role, involved in the control of the cell cycle. Essential for both G1/S and G2/M (mitosis) phase transitions. Functions in cell morphogenesis as well as cell proliferation. Required for cell division (entry into mitosis) of the generative cell in male gametogenesis. Required to trigger guard mother cells (GMC) symmetric divisions at the late stage of stomatal development, probably via the regulation of G1 to S transition in the cell cycle. Required for the function of SPCH in entering the stomatal lineage. Promotes divisions in the guard cells (GCs) after the guard mother cells (GMC) symmetric division when in the presence of CYCD3-2 via the phosphorylation of SPCH. The chain is Cyclin-dependent kinase A-1 from Arabidopsis thaliana (Mouse-ear cress).